A 173-amino-acid chain; its full sequence is Adenine phosphoribosyltransferase (173 aa).

It belongs to the purine/pyrimidine phosphoribosyltransferase family. In terms of assembly, homodimer.

Its subcellular location is the cytoplasm. The enzyme catalyses AMP + diphosphate = 5-phospho-alpha-D-ribose 1-diphosphate + adenine. It participates in purine metabolism; AMP biosynthesis via salvage pathway; AMP from adenine: step 1/1. Catalyzes a salvage reaction resulting in the formation of AMP, that is energically less costly than de novo synthesis. This is Adenine phosphoribosyltransferase from Chloroflexus aurantiacus (strain ATCC 29366 / DSM 635 / J-10-fl).